The sequence spans 274 residues: Thiazole synthase (274 aa).

Residue K115 is the Schiff-base intermediate with DXP of the active site. 1-deoxy-D-xylulose 5-phosphate is bound by residues G176, A202–G203, and N224–S225.

The protein belongs to the ThiG family. As to quaternary structure, homotetramer. Forms heterodimers with either ThiH or ThiS.

The protein localises to the cytoplasm. It catalyses the reaction [ThiS sulfur-carrier protein]-C-terminal-Gly-aminoethanethioate + 2-iminoacetate + 1-deoxy-D-xylulose 5-phosphate = [ThiS sulfur-carrier protein]-C-terminal Gly-Gly + 2-[(2R,5Z)-2-carboxy-4-methylthiazol-5(2H)-ylidene]ethyl phosphate + 2 H2O + H(+). It participates in cofactor biosynthesis; thiamine diphosphate biosynthesis. Its function is as follows. Catalyzes the rearrangement of 1-deoxy-D-xylulose 5-phosphate (DXP) to produce the thiazole phosphate moiety of thiamine. Sulfur is provided by the thiocarboxylate moiety of the carrier protein ThiS. In vitro, sulfur can be provided by H(2)S. The polypeptide is Thiazole synthase (Psychrobacter arcticus (strain DSM 17307 / VKM B-2377 / 273-4)).